We begin with the raw amino-acid sequence, 292 residues long: 33 kDa chaperonin (292 aa).

2 cysteine pairs are disulfide-bonded: Cys238–Cys240 and Cys271–Cys274.

It belongs to the HSP33 family. Under oxidizing conditions two disulfide bonds are formed involving the reactive cysteines. Under reducing conditions zinc is bound to the reactive cysteines and the protein is inactive.

The protein localises to the cytoplasm. In terms of biological role, redox regulated molecular chaperone. Protects both thermally unfolding and oxidatively damaged proteins from irreversible aggregation. Plays an important role in the bacterial defense system toward oxidative stress. This Alkaliphilus metalliredigens (strain QYMF) protein is 33 kDa chaperonin.